A 459-amino-acid chain; its full sequence is Fibrinogen C domain-containing protein 1 (459 aa).

The segment at 1–22 (MVHERWKTVGSASQLEDRPRDK) is disordered. Residues 1–33 (MVHERWKTVGSASQLEDRPRDKPQRASCSYVLC) are Cytoplasmic-facing. The helical; Signal-anchor for type II membrane protein transmembrane segment at 34–54 (TVLLSLAVLLAVAVTGVVLFL) threads the bilayer. The Extracellular portion of the chain corresponds to 55–459 (NHTHTPGTAP…MKIRPVREDR (405 aa)). The Fibrinogen C-terminal domain occupies 233–456 (CANGSRPRDC…FSEMKIRPVR (224 aa)). The cysteines at positions 242 and 271 are disulfide-linked. The N-linked (GlcNAc...) asparagine glycan is linked to asparagine 338. Aspartate 391 and aspartate 393 together coordinate Ca(2+). An intrachain disulfide couples cysteine 399 to cysteine 412.

Homotetramer; disulfide-linked.

The protein resides in the membrane. Functionally, acetyl group-binding receptor which shows a high-affinity and calcium-dependent binding to acetylated structures such as chitin, some N-acetylated carbohydrates, and amino acids, but not to their non-acetylated counterparts. Can facilitate the endocytosis of acetylated components. This Mus musculus (Mouse) protein is Fibrinogen C domain-containing protein 1 (Fibcd1).